The chain runs to 339 residues: Heat-inducible transcription repressor HrcA (339 aa).

Belongs to the HrcA family.

Negative regulator of class I heat shock genes (grpE-dnaK-dnaJ and groELS operons). Prevents heat-shock induction of these operons. This is Heat-inducible transcription repressor HrcA from Clostridium perfringens (strain 13 / Type A).